Here is a 691-residue protein sequence, read N- to C-terminus: Elongation factor G (691 aa).

The tr-type G domain occupies 8-282 (ERVRNIGIAA…AVVDYLPAPV (275 aa)). GTP is bound by residues 17–24 (AHIDAGKT), 81–85 (DTPGH), and 135–138 (NKMD).

This sequence belongs to the TRAFAC class translation factor GTPase superfamily. Classic translation factor GTPase family. EF-G/EF-2 subfamily.

The protein localises to the cytoplasm. Its function is as follows. Catalyzes the GTP-dependent ribosomal translocation step during translation elongation. During this step, the ribosome changes from the pre-translocational (PRE) to the post-translocational (POST) state as the newly formed A-site-bound peptidyl-tRNA and P-site-bound deacylated tRNA move to the P and E sites, respectively. Catalyzes the coordinated movement of the two tRNA molecules, the mRNA and conformational changes in the ribosome. The chain is Elongation factor G from Prochlorococcus marinus (strain MIT 9303).